A 463-amino-acid chain; its full sequence is 3-phosphoshikimate 1-carboxyvinyltransferase (463 aa).

Lysine 26, serine 27, and arginine 31 together coordinate 3-phosphoshikimate. Position 26 (lysine 26) interacts with phosphoenolpyruvate. The phosphoenolpyruvate site is built by glycine 99 and arginine 127. Residues serine 163, serine 164, glutamine 165, serine 188, aspartate 300, and lysine 327 each contribute to the 3-phosphoshikimate site. Glutamine 165 contributes to the phosphoenolpyruvate binding site. Catalysis depends on aspartate 300, which acts as the Proton acceptor. Residues arginine 331 and arginine 372 each contribute to the phosphoenolpyruvate site.

It belongs to the EPSP synthase family. In terms of assembly, monomer.

Its subcellular location is the cytoplasm. The catalysed reaction is 3-phosphoshikimate + phosphoenolpyruvate = 5-O-(1-carboxyvinyl)-3-phosphoshikimate + phosphate. It functions in the pathway metabolic intermediate biosynthesis; chorismate biosynthesis; chorismate from D-erythrose 4-phosphate and phosphoenolpyruvate: step 6/7. In terms of biological role, catalyzes the transfer of the enolpyruvyl moiety of phosphoenolpyruvate (PEP) to the 5-hydroxyl of shikimate-3-phosphate (S3P) to produce enolpyruvyl shikimate-3-phosphate and inorganic phosphate. The sequence is that of 3-phosphoshikimate 1-carboxyvinyltransferase from Burkholderia pseudomallei (Pseudomonas pseudomallei).